A 110-amino-acid polypeptide reads, in one-letter code: Large ribosomal subunit protein uL22 (110 aa).

The protein belongs to the universal ribosomal protein uL22 family. In terms of assembly, part of the 50S ribosomal subunit.

This protein binds specifically to 23S rRNA; its binding is stimulated by other ribosomal proteins, e.g. L4, L17, and L20. It is important during the early stages of 50S assembly. It makes multiple contacts with different domains of the 23S rRNA in the assembled 50S subunit and ribosome. In terms of biological role, the globular domain of the protein is located near the polypeptide exit tunnel on the outside of the subunit, while an extended beta-hairpin is found that lines the wall of the exit tunnel in the center of the 70S ribosome. The chain is Large ribosomal subunit protein uL22 from Yersinia enterocolitica serotype O:8 / biotype 1B (strain NCTC 13174 / 8081).